The chain runs to 198 residues: MENQFQDGKEEVIEAWYMDDSEEDQRLPHHREPKEFIPLSKLSELGILSWRLNADDWENDENLKKIREARGYSYMDICDVCPEKLPNYEAKLKNFFEEHLHTDEEIRYCLEGSGYFDVRDQNDQWIRVAVKKGGMIVLPAGMYHRFTLDSDNYIKAMRLFVGEPVWTPYNRPHDHLPARKEYVEKIINRGGTQAVEAR.

His-99, His-101, Glu-105, and His-144 together coordinate Fe(2+). Residues His-99, His-101, Glu-105, and His-144 each contribute to the Ni(2+) site.

The protein belongs to the acireductone dioxygenase (ARD) family. It depends on Fe(2+) as a cofactor. The cofactor is Ni(2+). In terms of tissue distribution, ubiquitous.

The protein localises to the cytoplasm. Its subcellular location is the nucleus. It carries out the reaction 1,2-dihydroxy-5-(methylsulfanyl)pent-1-en-3-one + O2 = 4-methylsulfanyl-2-oxobutanoate + formate + 2 H(+). It catalyses the reaction 1,2-dihydroxy-5-(methylsulfanyl)pent-1-en-3-one + O2 = 3-(methylsulfanyl)propanoate + CO + formate + 2 H(+). It functions in the pathway amino-acid biosynthesis; L-methionine biosynthesis via salvage pathway; L-methionine from S-methyl-5-thio-alpha-D-ribose 1-phosphate: step 5/6. In terms of biological role, catalyzes 2 different reactions between oxygen and the acireductone 1,2-dihydroxy-3-keto-5-methylthiopentene (DHK-MTPene) depending upon the metal bound in the active site. Fe-containing acireductone dioxygenase (Fe-ARD) produces formate and 2-keto-4-methylthiobutyrate (KMTB), the alpha-ketoacid precursor of methionine in the methionine recycle pathway. Ni-containing acireductone dioxygenase (Ni-ARD) produces methylthiopropionate, carbon monoxide and formate, and does not lie on the methionine recycle pathway. The sequence is that of Acireductone dioxygenase 2 (ARD2) from Oryza sativa subsp. indica (Rice).